The following is a 1080-amino-acid chain: DNA polymerase II large subunit (1080 aa).

This sequence belongs to the archaeal DNA polymerase II family. In terms of assembly, heterodimer of a large subunit and a small subunit.

It carries out the reaction DNA(n) + a 2'-deoxyribonucleoside 5'-triphosphate = DNA(n+1) + diphosphate. It catalyses the reaction Exonucleolytic cleavage in the 3'- to 5'-direction to yield nucleoside 5'-phosphates.. In terms of biological role, possesses two activities: a DNA synthesis (polymerase) and an exonucleolytic activity that degrades single-stranded DNA in the 3'- to 5'-direction. Has a template-primer preference which is characteristic of a replicative DNA polymerase. This chain is DNA polymerase II large subunit, found in Picrophilus torridus (strain ATCC 700027 / DSM 9790 / JCM 10055 / NBRC 100828 / KAW 2/3).